Here is a 740-residue protein sequence, read N- to C-terminus: Polyribonucleotide nucleotidyltransferase (740 aa).

Asp-496 and Asp-502 together coordinate Mg(2+). The region spanning 563-622 is the KH domain; sequence PAIIRTSIHPDKIRDIIGPGGKIIKKLVEETGADIDIEDDGRVFIAAVDREKGKRALEII. In terms of domain architecture, S1 motif spans 632–706; it reads GKLYNGKVTR…QQGRLKLSKK (75 aa). The segment at 707–740 is disordered; it reads EAMRDMGLAPAESTSEQPEKRERRPFSRPKATKE. Residues 723–740 are compositionally biased toward basic and acidic residues; the sequence is QPEKRERRPFSRPKATKE.

This sequence belongs to the polyribonucleotide nucleotidyltransferase family. Mg(2+) serves as cofactor.

The protein localises to the cytoplasm. The catalysed reaction is RNA(n+1) + phosphate = RNA(n) + a ribonucleoside 5'-diphosphate. Involved in mRNA degradation. Catalyzes the phosphorolysis of single-stranded polyribonucleotides processively in the 3'- to 5'-direction. The protein is Polyribonucleotide nucleotidyltransferase of Desulforamulus reducens (strain ATCC BAA-1160 / DSM 100696 / MI-1) (Desulfotomaculum reducens).